The following is a 1072-amino-acid chain: PWWP domain-containing protein 1 (1072 aa).

The tract at residues 21 to 133 (DSIQDPKVTP…ADEKELDLGL (113 aa)) is disordered. A compositionally biased stretch (low complexity) spans 25 to 38 (DPKVTPDDTVVDSS). Positions 66–77 (RVLESERSEKDG) are enriched in basic and acidic residues. The segment covering 96–128 (KDDESSEVKEEEEEEDGSDDQSSELGSEADEKE) has biased composition (acidic residues). Residues 173-234 (VGDLVWGKVK…PAELIPFEPN (62 aa)) form the PWWP domain. The disordered stretch occupies residues 365–387 (KSPRSSVSTLEPHNRAPPRAPLS). Positions 366-375 (SPRSSVSTLE) are enriched in polar residues. The Nuclear localization signal 1 motif lies at 402–409 (SKKPTKVK). 4 disordered regions span residues 486 to 619 (AIPG…GEAG), 681 to 738 (LSVS…KTNQ), 871 to 931 (KAEP…NGNR), and 944 to 973 (ENSSKANTEPPQVTMTLNRNSGPSSSSSSV). Residues 498–526 (SLDEEKGLAEKSKERMEERAAVLPEHGKS) are compositionally biased toward basic and acidic residues. The segment covering 545–568 (AGSSLQPLLESHTSASEGKSSTGS) has biased composition (polar residues). 3 consecutive short sequence motifs (nuclear localization signal) follow at residues 596–603 (KKKKKEPD), 705–712 (VKRTEDPS), and 733–740 (LKKTNQLK). Positions 706-729 (KRTEDPSKAGKKRLSSDRQDEIPS) are enriched in basic and acidic residues. Residues 871-880 (KAEPREPENT) show a composition bias toward basic and acidic residues. A compositionally biased stretch (pro residues) spans 897–906 (LHQPTLPPPN). Residues 921-930 (SSSSNNGNGN) show a composition bias toward low complexity. The segment covering 947–966 (SKANTEPPQVTMTLNRNSGP) has biased composition (polar residues).

Belongs to the PDP family. Interacts with MSI4/FVE. Component of the PRC2 (polycomb repressive complex 2) complex which regulates histone methylation on histone H3K27.

Its subcellular location is the nucleus. Functionally, together with PDP2, PDP3 and PDP6, interacts with MSI4/FVE and MSI5 to suppress FLC, MAF4 and MAF5 expression by regulating the function of the PRC2 complex and modulating H3K27me3 level, thereby promoting flowering. The protein is PWWP domain-containing protein 1 of Arabidopsis thaliana (Mouse-ear cress).